Consider the following 90-residue polypeptide: Small ribosomal subunit protein bS16 (90 aa).

Belongs to the bacterial ribosomal protein bS16 family.

The protein is Small ribosomal subunit protein bS16 of Anoxybacillus flavithermus (strain DSM 21510 / WK1).